The sequence spans 179 residues: D-glycero-beta-D-manno-heptose-1,7-bisphosphate 7-phosphatase (179 aa).

The active-site Nucleophile is D7. Residues D7 and D9 each coordinate Mg(2+). D7 serves as a coordination point for substrate. D9 (proton donor) is an active-site residue. Substrate contacts are provided by residues 15–19 (DSDAF), 50–53 (TNQS), and R57. Residues C89, H91, C97, and C99 each coordinate Zn(2+). Residue R100 participates in substrate binding. D126 contacts Mg(2+). Residue R129 participates in substrate binding.

As to quaternary structure, monomer. Requires Mg(2+) as cofactor. It depends on Zn(2+) as a cofactor.

The protein localises to the cytoplasm. The enzyme catalyses D-glycero-beta-D-manno-heptose 1,7-bisphosphate + H2O = D-glycero-beta-D-manno-heptose 1-phosphate + phosphate. It participates in nucleotide-sugar biosynthesis; ADP-L-glycero-beta-D-manno-heptose biosynthesis; ADP-L-glycero-beta-D-manno-heptose from D-glycero-beta-D-manno-heptose 7-phosphate: step 2/4. It functions in the pathway bacterial outer membrane biogenesis; LPS core biosynthesis. Functionally, converts the D-glycero-beta-D-manno-heptose 1,7-bisphosphate (beta-HBP) intermediate into D-glycero-beta-D-manno-heptose 1-phosphate by removing the phosphate group at the C-7 position. In Bordetella bronchiseptica (strain ATCC BAA-588 / NCTC 13252 / RB50) (Alcaligenes bronchisepticus), this protein is D-glycero-beta-D-manno-heptose-1,7-bisphosphate 7-phosphatase.